Here is a 165-residue protein sequence, read N- to C-terminus: Large ribosomal subunit protein uL11 (165 aa).

Phosphoserine is present on serine 38. Lysine 40 is covalently cross-linked (Glycyl lysine isopeptide (Lys-Gly) (interchain with G-Cter in SUMO2)). A Glycyl lysine isopeptide (Lys-Gly) (interchain with G-Cter in ubiquitin) cross-link involves residue lysine 48. Lysine 54 is subject to N6-acetyllysine. Lysine 83 is covalently cross-linked (Glycyl lysine isopeptide (Lys-Gly) (interchain with G-Cter in ubiquitin)). Residue serine 165 is modified to Phosphoserine.

This sequence belongs to the universal ribosomal protein uL11 family. In terms of assembly, component of the large ribosomal subunit. Mature ribosomes consist of a small (40S) and a large (60S) subunit. The 40S subunit contains about 33 different proteins and 1 molecule of RNA (18S). The 60S subunit contains about 49 different proteins and 3 molecules of RNA (28S, 5.8S and 5S). Post-translationally, ubiquitinated at Lys-48 and Lys-83 by RNF14 and RNF25 in response to ribosome collisions (ribosome stalling).

The protein resides in the cytoplasm. Functionally, component of the large ribosomal subunit. The ribosome is a large ribonucleoprotein complex responsible for the synthesis of proteins in the cell. Binds directly to 26S ribosomal RNA. The protein is Large ribosomal subunit protein uL11 (RPL12) of Chinchilla lanigera (Long-tailed chinchilla).